The primary structure comprises 251 residues: Triosephosphate isomerase (251 aa).

Positions 10 and 12 each coordinate substrate. Residue histidine 96 is the Electrophile of the active site. Glutamate 168 functions as the Proton acceptor in the catalytic mechanism.

This sequence belongs to the triosephosphate isomerase family. As to quaternary structure, homodimer.

It carries out the reaction D-glyceraldehyde 3-phosphate = dihydroxyacetone phosphate. Its pathway is carbohydrate biosynthesis; gluconeogenesis. It functions in the pathway carbohydrate degradation; glycolysis; D-glyceraldehyde 3-phosphate from glycerone phosphate: step 1/1. The polypeptide is Triosephosphate isomerase (tpiA) (Aspergillus oryzae (strain ATCC 42149 / RIB 40) (Yellow koji mold)).